Here is a 261-residue protein sequence, read N- to C-terminus: ClpXP adapter protein SpxH (261 aa).

This sequence belongs to the SpxH family. In terms of assembly, interacts with Spx.

Its subcellular location is the cytoplasm. Adapter protein required for efficient degradation of Spx by ClpXP under non-stress conditions. Interaction with Spx stabilizes Spx and exposes the C-terminus of Spx for recognition and proteolysis by ClpXP. The sequence is that of ClpXP adapter protein SpxH from Staphylococcus aureus.